Here is a 290-residue protein sequence, read N- to C-terminus: Bifunctional protein FolD (290 aa).

NADP(+) contacts are provided by residues 166–168 (GQS), S191, and I232.

Belongs to the tetrahydrofolate dehydrogenase/cyclohydrolase family. As to quaternary structure, homodimer.

It catalyses the reaction (6R)-5,10-methylene-5,6,7,8-tetrahydrofolate + NADP(+) = (6R)-5,10-methenyltetrahydrofolate + NADPH. It carries out the reaction (6R)-5,10-methenyltetrahydrofolate + H2O = (6R)-10-formyltetrahydrofolate + H(+). The protein operates within one-carbon metabolism; tetrahydrofolate interconversion. Catalyzes the oxidation of 5,10-methylenetetrahydrofolate to 5,10-methenyltetrahydrofolate and then the hydrolysis of 5,10-methenyltetrahydrofolate to 10-formyltetrahydrofolate. The sequence is that of Bifunctional protein FolD from Halorhodospira halophila (strain DSM 244 / SL1) (Ectothiorhodospira halophila (strain DSM 244 / SL1)).